Here is a 487-residue protein sequence, read N- to C-terminus: L-tartrate/succinate antiporter (487 aa).

A run of 14 helical transmembrane segments spans residues 10-30 (YLAP…AGLE), 33-53 (TWLY…EPVP), 54-74 (GAVV…WLLF), 93-113 (WAVS…FMFG), 137-157 (TLFL…VTPS), 189-209 (IGSY…AIFL), 236-256 (FLGM…LAYV), 292-312 (LMVG…AAMV), 313-333 (GYSV…DIVS), 340-360 (VFFW…TGFI), 370-390 (SLSG…FYLL), 393-413 (FFAS…AAAL), 418-438 (IPLP…SILT), and 462-482 (LGAI…LLWM).

This sequence belongs to the SLC13A/DASS transporter (TC 2.A.47) family. DIT1 subfamily.

Its subcellular location is the cell inner membrane. The enzyme catalyses (2R,3R)-tartrate(out) + succinate(in) = (2R,3R)-tartrate(in) + succinate(out). Catalyzes the uptake of tartrate in exchange for intracellular succinate. Essential for anaerobic L-tartrate fermentation. In Escherichia coli O6:H1 (strain CFT073 / ATCC 700928 / UPEC), this protein is L-tartrate/succinate antiporter (ttdT).